The following is a 511-amino-acid chain: Ribonuclease E/G-like protein (511 aa).

Positions 35–117 constitute an S1 motif domain; it reads SDIYLGTVDK…LTANITLSGR (83 aa). Mg(2+)-binding residues include Asp-296 and Asp-339.

It belongs to the RNase E/G family. Mg(2+) is required as a cofactor.

It localises to the plastid. The protein localises to the chloroplast stroma. In terms of biological role, involved in intercistronic processing of primary transcripts from chloroplast operons. The endonucleolytic activity of the enzyme depends on the number of phosphates at the 5' end, is inhibited by structured RNA, and preferentially cleaves A/U-rich sequences. This is Ribonuclease E/G-like protein (rne) from Porphyra purpurea (Red seaweed).